The primary structure comprises 213 residues: Ion-translocating oxidoreductase complex subunit A (213 aa).

Over 1–24 the chain is Periplasmic; the sequence is MLLLWQSRIMPGSEANIYITMTEY. Residues 25-45 traverse the membrane as a helical segment; the sequence is LLLLIGTVLVNNFVLVKFLGL. Residues 46–58 lie on the Cytoplasmic side of the membrane; the sequence is CPFMGVSKKLETA. A helical transmembrane segment spans residues 59-79; it reads IGMGLATTFVLTLASVCAYLV. Over 80–86 the chain is Periplasmic; it reads ESYVLRP. The helical transmembrane segment at 87–107 threads the bilayer; sequence LGIEYLRTMSFILVIAVVVQF. The Cytoplasmic portion of the chain corresponds to 108 to 121; it reads TEMVVHKTSPTLYR. Residues 122–142 traverse the membrane as a helical segment; the sequence is LLGIFLPLITTNCAVLGVALL. The Periplasmic segment spans residues 143-153; that stretch reads NINENHNFIQS. The chain crosses the membrane as a helical span at residues 154 to 174; that stretch reads IIYGFGAAVGFSLVLILFASM. The Cytoplasmic portion of the chain corresponds to 175–190; that stretch reads RERIHVADVPAPFKGA. A helical membrane pass occupies residues 191–211; the sequence is SIAMITAGLMSLAFMGFTGLV. The Periplasmic segment spans residues 212-213; the sequence is KL.

This sequence belongs to the NqrDE/RnfAE family. As to quaternary structure, the complex is composed of six subunits: RnfA, RnfB, RnfC, RnfD, RnfE and RnfG.

It is found in the cell inner membrane. Its function is as follows. Part of a membrane-bound complex that couples electron transfer with translocation of ions across the membrane. The polypeptide is Ion-translocating oxidoreductase complex subunit A (Vibrio cholerae serotype O1 (strain ATCC 39541 / Classical Ogawa 395 / O395)).